A 622-amino-acid polypeptide reads, in one-letter code: Probable ATP-dependent RNA helicase DDX41 (622 aa).

Residues 1–15 (MEESEPERKRARTDE) show a composition bias toward basic and acidic residues. Disordered regions lie at residues 1–39 (MEES…YVPL) and 52–84 (QRRR…PQSN). At serine 4 the chain carries Phosphoserine. Lysine 9 is subject to N6-acetyllysine. Lysine 9 is covalently cross-linked (Glycyl lysine isopeptide (Lys-Gly) (interchain with G-Cter in ubiquitin)). 2 positions are modified to phosphoserine: serine 21 and serine 23. A Phosphotyrosine modification is found at tyrosine 33. Lysine 115 is covalently cross-linked (Glycyl lysine isopeptide (Lys-Gly) (interchain with G-Cter in ubiquitin)). The Q motif signature appears at 181–209 (KSFKEMKFPAAILRGLKKKGIHHPTPIQI). The Helicase ATP-binding domain maps to 212–396 (IPTILSGRDM…KSALVKPVTI (185 aa)). Position 225-232 (225-232 (AFTGSGKT)) interacts with ATP. The short motif at 344 to 347 (DEAD) is the DEAD box element. The Helicase C-terminal domain maps to 407–567 (DVIQEVEYVK…KVPPVLQVLH (161 aa)). Tyrosine 414 is subject to Phosphotyrosine; by BTK. Glycyl lysine isopeptide (Lys-Gly) (interchain with G-Cter in SUMO2) cross-links involve residues lysine 416 and lysine 442. A CCHC-type zinc finger spans residues 580 to 597 (RGCAFCGGLGHRITDCPK).

Belongs to the DEAD box helicase family. DDX41 subfamily. Identified in the spliceosome C complex. Interacts with ERCC6. Interacts with FAM50A. Interacts with STING1. Interacts with CGAS. Interacts with several spliceosomes components such as PRP19 or CDC5L. Acetylation at Lys-9 regulates the nuclear/cytoplasmic localization. Post-translationally, phosphorylated by BTK; phosphorylation induces binding to dsDNA and STING1. In terms of processing, 'Lys-48'-linked ubiquitinated and degraded by TRIM21 leading to negative regulation of the innate immune response to intracellular dsDNA.

It is found in the nucleus. Its subcellular location is the cytoplasm. It catalyses the reaction ATP + H2O = ADP + phosphate + H(+). Functionally, multifunctional protein that participates in many aspects of cellular RNA metabolism. Plays pivotal roles in innate immune sensing and hematopoietic homeostasis. Recognizes foreign or self-nucleic acids generated during microbial infection, thereby initiating anti-pathogen responses. Mechanistically, phosphorylation by BTK allows binding to dsDNA leading to interaction with STING1. Modulates the homeostasis of dsDNA through its ATP-dependent DNA-unwinding activity and ATP-independent strand-annealing activity. In turn, induces STING1-mediated type I interferon and cytokine responses to DNA and DNA viruses. Selectively modulates the transcription of certain immunity-associated genes by regulating their alternative splicing. Binds to RNA (R)-loops, structures consisting of DNA/RNA hybrids and a displaced strand of DNA that occur during transcription, and prevents their accumulation, thereby maintaining genome stability. Also participates in pre-mRNA splicing, translational regulation and snoRNA processing, which is essential for ribosome biogenesis. The chain is Probable ATP-dependent RNA helicase DDX41 (DDX41) from Homo sapiens (Human).